A 200-amino-acid chain; its full sequence is Small ribosomal subunit protein uS4 (200 aa).

The disordered stretch occupies residues 21–42 (GTGKELQKRPYPPGQHGPGQRR). Residues 92-155 (SRLDNLVYRL…RNLQVIKEAI (64 aa)) enclose the S4 RNA-binding domain.

Belongs to the universal ribosomal protein uS4 family. As to quaternary structure, part of the 30S ribosomal subunit. Contacts protein S5. The interaction surface between S4 and S5 is involved in control of translational fidelity.

Functionally, one of the primary rRNA binding proteins, it binds directly to 16S rRNA where it nucleates assembly of the body of the 30S subunit. Its function is as follows. With S5 and S12 plays an important role in translational accuracy. The protein is Small ribosomal subunit protein uS4 of Geobacillus thermodenitrificans (strain NG80-2).